The chain runs to 302 residues: Sulfotransferase 1C4 (302 aa).

3'-phosphoadenylyl sulfate is bound at residue 55-60; that stretch reads KAGTTW. A substrate-binding site is contributed by 113 to 115; sequence KTH. Catalysis depends on histidine 115, which acts as the Proton acceptor. 3'-phosphoadenylyl sulfate contacts are provided by residues arginine 137, serine 145, tyrosine 200, 234–239, and 262–266; these read TSFDVM and FMRKG.

The protein belongs to the sulfotransferase 1 family. Expressed in liver, kidney and jejunum.

The protein resides in the cytoplasm. It localises to the cytosol. It catalyses the reaction a phenol + 3'-phosphoadenylyl sulfate = an aryl sulfate + adenosine 3',5'-bisphosphate + H(+). The enzyme catalyses 17beta-estradiol + 3'-phosphoadenylyl sulfate = 17beta-estradiol 3-sulfate + adenosine 3',5'-bisphosphate + H(+). It carries out the reaction bisphenol A + 3'-phosphoadenylyl sulfate = bisphenyl A sulfate + adenosine 3',5'-bisphosphate + H(+). Its function is as follows. Sulfotransferase that utilizes 3'-phospho-5'-adenylyl sulfate (PAPS) as sulfonate donor to catalyze the sulfate conjugation of phenolic compounds and estrogen (E2). Can also sulfonate estrogenic compounds, however, the dietary flavonoids (phytoestrogen) and environmental estrogens, like bisphenol A are better substrates than 17beta-estradiol (E2). The protein is Sulfotransferase 1C4 (SULT1C4) of Macaca fascicularis (Crab-eating macaque).